The primary structure comprises 132 residues: MAYVRLTSLAVLFFLAASVMLNVKKTEGGEFLKCGESCVQGECYTPGCSCDWPICKKNHIIATNAKTVNQHRLLCESHEDCFKKGTGNYCAFFPDSDVHFGWCFYAESDGYLLKDFFKMSKDNLKMPMTIIN.

An N-terminal signal peptide occupies residues M1–G28. Residues G29–N58 constitute a cross-link (cyclopeptide (Gly-Asn)). Cystine bridges form between C34/C48, C38/C50, and C43/C55. The propeptide at H59 to N132 is removed in mature form.

In terms of processing, this is a cyclic peptide. In terms of tissue distribution, expressed in flower, stem, shoot and pod but not in root, leaf, seed and nodule (at protein level).

Its function is as follows. Probably participates in a plant defense mechanism. Not active against Gram-negative bacteria E.coli ATCC 700926, K.pneumoniae ATTC 13883 and P.aeruginosa ATCC 39018 at concentration up to 100 uM. Has cytotoxic but no hemolytic activity. The sequence is that of Cliotide T2 from Clitoria ternatea (Butterfly pea).